Consider the following 352-residue polypeptide: MTDSKSNSNSPSLSYKDAGVDIDAGNALVERIKSVAKRTRRPEVMAGLGGFGALFELPKGYQEPVLVAGTDGVGTKLKLAMQLNKHDTIGIDLVAMCVNDLIVGGAEPLFFLDYYATGKLSVDVAASVVEGIGAGCELSGCSLVGGETAEMPGMYEGEDYDLAGFCVGIVEKSKILDGSKVAAGDVLLGIPSSGPHSNGYSLIRKVLEVSGASLDDKVGDTTLGQALLEPTRIYVKPLLELFKNVQVNALSHITGGGLLENIPRVLPENTRAQIDCASWELPPVFKWLQEQGNINAVEMYRTFNCGVGMIVCVPAAEAANAIAQLKQSGEDAFEIGKIVAAEGAPEVDLLNL.

It belongs to the AIR synthase family.

The protein localises to the cytoplasm. It catalyses the reaction 2-formamido-N(1)-(5-O-phospho-beta-D-ribosyl)acetamidine + ATP = 5-amino-1-(5-phospho-beta-D-ribosyl)imidazole + ADP + phosphate + H(+). It functions in the pathway purine metabolism; IMP biosynthesis via de novo pathway; 5-amino-1-(5-phospho-D-ribosyl)imidazole from N(2)-formyl-N(1)-(5-phospho-D-ribosyl)glycinamide: step 2/2. In Saccharophagus degradans (strain 2-40 / ATCC 43961 / DSM 17024), this protein is Phosphoribosylformylglycinamidine cyclo-ligase.